The following is a 152-amino-acid chain: Transcriptional regulator MraZ (152 aa).

SpoVT-AbrB domains lie at 5-52 (ANAI…PLNE) and 81-124 (ATES…DEDM).

This sequence belongs to the MraZ family. In terms of assembly, forms oligomers.

It localises to the cytoplasm. The protein localises to the nucleoid. The sequence is that of Transcriptional regulator MraZ from Psychromonas ingrahamii (strain DSM 17664 / CCUG 51855 / 37).